The sequence spans 324 residues: tRNA N6-adenosine threonylcarbamoyltransferase (324 aa).

Fe cation-binding residues include His-107, His-111, and Tyr-127. Substrate contacts are provided by residues 127–131, Asp-159, Gly-172, Glu-176, and Asn-257; that span reads YVSGG. Asp-285 provides a ligand contact to Fe cation.

Belongs to the KAE1 / TsaD family. In terms of assembly, monomer. Component of the KEOPS complex that consists of Kae1, Bud32, Cgi121 and Pcc1; the whole complex dimerizes. Fe(2+) serves as cofactor.

The protein localises to the cytoplasm. It carries out the reaction L-threonylcarbamoyladenylate + adenosine(37) in tRNA = N(6)-L-threonylcarbamoyladenosine(37) in tRNA + AMP + H(+). Functionally, required for the formation of a threonylcarbamoyl group on adenosine at position 37 (t(6)A37) in tRNAs that read codons beginning with adenine. Is a component of the KEOPS complex that is probably involved in the transfer of the threonylcarbamoyl moiety of threonylcarbamoyl-AMP (TC-AMP) to the N6 group of A37. Kae1 likely plays a direct catalytic role in this reaction, but requires other protein(s) of the complex to fulfill this activity. In vitro, binds tRNA, ssRNA, both single- and double-stranded DNA, and exhibits a low ATPase activity. The sequence is that of tRNA N6-adenosine threonylcarbamoyltransferase from Pyrococcus abyssi (strain GE5 / Orsay).